The sequence spans 256 residues: Small ribosomal subunit protein uS2 (256 aa).

This sequence belongs to the universal ribosomal protein uS2 family.

The sequence is that of Small ribosomal subunit protein uS2 from Acidiphilium cryptum (strain JF-5).